The sequence spans 249 residues: Triosephosphate isomerase (249 aa).

Residue Asn-8 to Lys-10 participates in substrate binding. Catalysis depends on His-95, which acts as the Electrophile. The active-site Proton acceptor is the Glu-163. Substrate is bound by residues Gly-169 and Ser-209.

The protein belongs to the triosephosphate isomerase family. In terms of assembly, homodimer.

The protein resides in the cytoplasm. It catalyses the reaction D-glyceraldehyde 3-phosphate = dihydroxyacetone phosphate. It functions in the pathway carbohydrate biosynthesis; gluconeogenesis. Its pathway is carbohydrate degradation; glycolysis; D-glyceraldehyde 3-phosphate from glycerone phosphate: step 1/1. In terms of biological role, involved in the gluconeogenesis. Catalyzes stereospecifically the conversion of dihydroxyacetone phosphate (DHAP) to D-glyceraldehyde-3-phosphate (G3P). The sequence is that of Triosephosphate isomerase from Orientia tsutsugamushi (strain Boryong) (Rickettsia tsutsugamushi).